Here is a 70-residue protein sequence, read N- to C-terminus: Eglin C (70 aa).

The protein belongs to the protease inhibitor I13 (potato type I serine protease inhibitor) family.

Inhibits both elastase and cathepsin G. This chain is Eglin C, found in Hirudo medicinalis (Medicinal leech).